The chain runs to 168 residues: Photosystem I assembly protein Ycf3 (168 aa).

TPR repeat units lie at residues 35–68, 72–105, and 120–153; these read AFTY…EIDP, SYIL…NPFL, and GEQA…TPGN.

The protein belongs to the Ycf3 family.

Its subcellular location is the plastid. The protein resides in the chloroplast thylakoid membrane. In terms of biological role, essential for the assembly of the photosystem I (PSI) complex. May act as a chaperone-like factor to guide the assembly of the PSI subunits. In Oenothera elata subsp. hookeri (Hooker's evening primrose), this protein is Photosystem I assembly protein Ycf3.